Consider the following 231-residue polypeptide: Cytochrome b-c1 complex subunit Rieske, mitochondrial (231 aa).

The N-terminal 24 residues, 1–24 (MAPVSIVSRAAMRAAAAPARAVRA), are a transit peptide targeting the mitochondrion. Positions 25–32 (LTTSTALQ) are cleaved as a propeptide — removed in mature form. The Mitochondrial matrix segment spans residues 33–65 (GSSSSTFESPFKGESKAAKVPDFGKYMSKAPPS). A helical membrane pass occupies residues 66 to 95 (TNMLFSYFMVGTMGAITAAGAKSTIQEFLK). Residues 96 to 231 (NMSASADVLA…FPEEGKLVIG (136 aa)) are Mitochondrial intermembrane-facing. One can recognise a Rieske domain in the interval 134–229 (RHRTPAEIEE…YEFPEEGKLV (96 aa)). [2Fe-2S] cluster is bound by residues Cys-174, His-176, Cys-193, and His-196. A disulfide bridge connects residues Cys-179 and Cys-195.

It belongs to the Rieske iron-sulfur protein family. As to quaternary structure, component of the ubiquinol-cytochrome c oxidoreductase (cytochrome b-c1 complex, complex III, CIII), a multisubunit enzyme composed of 10 subunits. The complex is composed of 3 respiratory subunits cytochrome b (cob), cytochrome c1 (cyt-1) and Rieske protein (fes-1), 2 core protein subunits pep and ucr-1, and 5 low-molecular weight protein subunits qcr6, qcr7, qcr8, qcr9 and probably NCU16844/qcr10. The complex exists as an obligatory dimer and forms supercomplexes (SCs) in the inner mitochondrial membrane with NADH-ubiquinone oxidoreductase (complex I, CI) and cytochrome c oxidase (complex IV, CIV), resulting in different assemblies (supercomplexes SCI(1)III(2), SCIII(2)IV(1) and SCIII(2)IV(2) as well as higher order I(x)III(y)IV(z) megacomplexes). It depends on [2Fe-2S] cluster as a cofactor. In terms of processing, processed by both the mitochondrial processing peptidase (MPP) and the mitochondrial intermediate protease (MIP). Initially, MPP removes 25 amino acids from the newly imported precursor in the mitochondrial matrix. This proteolytic processing is then followed by a second proteolytic cleavage by MIP, which removes an octapeptide to generate mature-sized Rieske protein.

Its subcellular location is the mitochondrion inner membrane. The enzyme catalyses a quinol + 2 Fe(III)-[cytochrome c](out) = a quinone + 2 Fe(II)-[cytochrome c](out) + 2 H(+)(out). Functionally, component of the ubiquinol-cytochrome c oxidoreductase, a multisubunit transmembrane complex that is part of the mitochondrial electron transport chain which drives oxidative phosphorylation. The respiratory chain contains 3 multisubunit complexes succinate dehydrogenase (complex II, CII), ubiquinol-cytochrome c oxidoreductase (cytochrome b-c1 complex, complex III, CIII) and cytochrome c oxidase (complex IV, CIV), that cooperate to transfer electrons derived from NADH and succinate to molecular oxygen, creating an electrochemical gradient over the inner membrane that drives transmembrane transport and the ATP synthase. The cytochrome b-c1 complex catalyzes electron transfer from ubiquinol to cytochrome c, linking this redox reaction to translocation of protons across the mitochondrial inner membrane, with protons being carried across the membrane as hydrogens on the quinol. In the process called Q cycle, 2 protons are consumed from the matrix, 4 protons are released into the intermembrane space and 2 electrons are passed to cytochrome c. The Rieske protein is a catalytic core subunit containing a [2Fe-2S] iron-sulfur cluster. It cycles between 2 conformational states during catalysis to transfer electrons from the quinol bound in the Q(0) site in cytochrome b to cytochrome c1. The sequence is that of Cytochrome b-c1 complex subunit Rieske, mitochondrial (fes-1) from Neurospora crassa (strain ATCC 24698 / 74-OR23-1A / CBS 708.71 / DSM 1257 / FGSC 987).